A 266-amino-acid chain; its full sequence is DNA primase (266 aa).

Residues 244–266 (VTTTTTPSPPKIGSMQTTTKSTT) are disordered. The span at 257-266 (SMQTTTKSTT) shows a compositional bias: polar residues.

It belongs to the baculoviridae LEF-1 family. In terms of assembly, interacts with LEF-2.

Its function is as follows. Plays an essential role in viral DNA replication. May generates single-stranded DNA for both leading and lagging strand synthesis. The primase initiates primer synthesis and thereby produces large amount of short RNA primers on the lagging strand that the polymerase elongates using dNTPs. The protein is DNA primase (LEF-1) of Autographa californica nuclear polyhedrosis virus (AcMNPV).